A 441-amino-acid chain; its full sequence is Polycomb protein EED (441 aa).

The interval 1 to 72 is disordered; that stretch reads MSEREVSTAP…PGRKSWGKGK (72 aa). N-acetylserine is present on Ser-2. A phosphoserine mark is found at Ser-2 and Ser-34. Polar residues predominate over residues 45–61; it reads ESGTNTERPDTPTNTPN. Residue Thr-55 is modified to Phosphothreonine. Lys-66 is subject to N6,N6,N6-trimethyllysine; alternate. Lys-66 carries the post-translational modification N6,N6-dimethyllysine; alternate. Lys-66 is modified (N6-methyllysine; alternate). Residues 81–441 are interaction with EZH2; it reads SFKCVNSLKE…ASIWRWDRLR (361 aa). 4 WD repeats span residues 91-134, 142-185, 188-228, and 234-275; these read DHNQ…EIRL, DADE…CIKH, GHGN…LVAI, and GHRD…NAIK. Required for interaction with the matrix protein MA of HIV-1 regions lie at residues 149-303 and 301-441; these read TCAW…STRD and TRDI…DRLR. An N6,N6,N6-trimethyllysine; alternate mark is found at Lys-197, Lys-268, and Lys-284. An N6,N6-dimethyllysine; alternate mark is found at Lys-197, Lys-268, and Lys-284. 3 positions are modified to N6-methyllysine; alternate: Lys-197, Lys-268, and Lys-284. WD repeat units lie at residues 304-341, 359-399, and 408-441; these read IHRNYVDCVRWLGDLILSKSCENAIVCWKPGKMEDDID, SQCD…PHKA, and KCGAAIRQTSFSRDSSILIAVCDDASIWRWDRLR.

It belongs to the WD repeat ESC family. As to quaternary structure, component of the PRC2/EED-EZH2 complex, which includes EED, EZH2, SUZ12, RBBP4 and RBBP7 and possibly AEBP2. The minimum components required for methyltransferase activity of the PRC2/EED-EZH2 complex are EED, EZH2 and SUZ12. Component of the PRC2/EED-EZH1 complex, which includes EED, EZH1, SUZ12, RBBP4 and AEBP2. The PRC2 complex may also interact with DNMT1, DNMT3A, DNMT3B and PHF1 via the EZH2 subunit and with SIRT1 via the SUZ12 subunit. Interacts with HDAC, HDAC2, histone H1 and YY1. May interact with ITGA4, ITGAE and ITGB7. Interacts with CDYL. Interacts with BMAL1. Interacts with KMT2A/MLL1. (Microbial infection) May interact with the MA protein of HIV-1. Post-translationally, methylated. Binding to histone H1 'Lys-26' promotes mono-, di-, and trimethylation of internal lysines. As to expression, expressed in brain, colon, heart, kidney, liver, lung, muscle, ovary, peripheral blood leukocytes, pancreas, placenta, prostate, spleen, small intestine, testis, thymus and uterus. Appears to be overexpressed in breast and colon cancer.

The protein localises to the nucleus. It localises to the chromosome. In terms of biological role, polycomb group (PcG) protein. Component of the PRC2/EED-EZH2 complex, which methylates 'Lys-9' and 'Lys-27' of histone H3, leading to transcriptional repression of the affected target gene. Also recognizes 'Lys-26' trimethylated histone H1 with the effect of inhibiting PRC2 complex methyltransferase activity on nucleosomal histone H3 'Lys-27', whereas H3 'Lys-27' recognition has the opposite effect, enabling the propagation of this repressive mark. The PRC2/EED-EZH2 complex may also serve as a recruiting platform for DNA methyltransferases, thereby linking two epigenetic repression systems. Genes repressed by the PRC2/EED-EZH2 complex include HOXC8, HOXA9, MYT1 and CDKN2A. This is Polycomb protein EED from Homo sapiens (Human).